Reading from the N-terminus, the 212-residue chain is MNDAALAPDVSAALERGLQAQSLDAAFAAPLLRYLALLVRWNKTYNLTAVRDPREMVTRHLLDSLAMQPYIASGTLADLGTGPGLPGIPLAITRPQLQVTLVESNGKKARFMREALRHLELGNARVAESRAEALDEPAAYDHLTARALDTLAGIIAVGGHLLRPGGSLLAMKGVYPHEEIAALPAGWTVGEVHPLQVPGLEGERHLVVVRKG.

S-adenosyl-L-methionine-binding positions include G80, L85, 131 to 132 (AE), and R146.

Belongs to the methyltransferase superfamily. RNA methyltransferase RsmG family.

The protein localises to the cytoplasm. It carries out the reaction guanosine(527) in 16S rRNA + S-adenosyl-L-methionine = N(7)-methylguanosine(527) in 16S rRNA + S-adenosyl-L-homocysteine. In terms of biological role, specifically methylates the N7 position of guanine in position 527 of 16S rRNA. This is Ribosomal RNA small subunit methyltransferase G from Xanthomonas euvesicatoria pv. vesicatoria (strain 85-10) (Xanthomonas campestris pv. vesicatoria).